A 463-amino-acid chain; its full sequence is Peptidylprolyl isomerase cyp7 (463 aa).

A PPIase cyclophilin-type domain is found at 11–166 (ATGTVILKTT…FPPKIISTEV (156 aa)). The interval 224–275 (VKKPLRQKTPVSRSSDTTTELSKDLISSSSSIHSTYSSAQTGLTSAKVSSDE) is disordered. The segment covering 232–243 (TPVSRSSDTTTE) has biased composition (polar residues). Positions 250–261 (SSSSSIHSTYSS) are enriched in low complexity. Positions 262–271 (AQTGLTSAKV) are enriched in polar residues.

This sequence belongs to the cyclophilin-type PPIase family. CWC27 subfamily. Belongs to the 40S cdc5-associated complex (or cwf complex), a spliceosome sub-complex reminiscent of a late-stage spliceosome composed of the U2, U5 and U6 snRNAs and at least brr2, cdc5, cwf2/prp3, cwf3/syf1, cwf4/syf3, cwf5/ecm2, spp42/cwf6, cwf7/spf27, cwf8, cwf9, cwf10, cwf11, cwf12, prp45/cwf13, cwf14, cwf15, cwf16, cwf17, cwf18, cwf19, cwf20, cwf21, cwf22, cwf23, cwf24, cwf25, cwf26, cyp7/cwf27, cwf28, cwf29/ist3, lea1, msl1, prp5/cwf1, prp10, prp12/sap130, prp17, prp22, sap61, sap62, sap114, sap145, slu7, smb1, smd1, smd3, smf1, smg1 and syf2.

Its subcellular location is the cytoplasm. It localises to the nucleus. The enzyme catalyses [protein]-peptidylproline (omega=180) = [protein]-peptidylproline (omega=0). Functionally, PPIases accelerate the folding of proteins. Catalyzes the cis-trans isomerization of proline imidic peptide bonds in oligopeptides. Involved in pre-mRNA splicing. This is Peptidylprolyl isomerase cyp7 (cyp7) from Schizosaccharomyces pombe (strain 972 / ATCC 24843) (Fission yeast).